Reading from the N-terminus, the 515-residue chain is Sphingolipid 10-desaturase (515 aa).

Residues 3–23 (AVWALLWALQLGTLVGCALVL) form a helical membrane-spanning segment. The 68-residue stretch at 46-113 (AKPISDQKAA…DISFVFRVMH (68 aa)) folds into the Cytochrome b5 heme-binding domain. Positions 90 and 113 each coordinate heme. Residues 198-218 (TWLLWNTAVLISIIALSVISM) traverse the membrane as a helical segment. A Histidine box-1 motif is present at residues 245 to 249 (HDAEH). A helical transmembrane segment spans residues 258-278 (LNDILGWIYGTVFLGVNGAWW). A Histidine box-2 motif is present at residues 281–286 (EHREHH). 3 helical membrane-spanning segments follow: residues 322 to 342 (IIHFLTNFQHILFLPIIFIVG), 359 to 379 (PWTILGNVCHILLHYAILSQT), and 382 to 402 (PIPVYIIGSLWQAILSLQLLG). The short motif at 447–451 (HYSHH) is the Histidine box-3 element.

It belongs to the fatty acid desaturase type 1 family. It depends on Fe(2+) as a cofactor.

It is found in the membrane. The catalysed reaction is a (4E,8E)-4-sphinga-4,8-dienine ceramide + 2 Fe(II)-[cytochrome b5] + O2 + 2 H(+) = an N-acyl-(4E,8E,10E)-sphingatrienine + 2 Fe(III)-[cytochrome b5] + 2 H2O. The protein operates within lipid metabolism; sphingolipid metabolism. Functionally, fatty acid desaturase that catalyzes the introduction of the third double bond at the Delta(10) position in d18:3Delta4,8,10 triunsaturated sphingolipid long fatty acid chains. The cytochrome b5 domain probably acts as the direct electron donor to the active site of the desaturase. The chain is Sphingolipid 10-desaturase from Thalassiosira pseudonana (Marine diatom).